Here is a 713-residue protein sequence, read N- to C-terminus: Cyclomaltodextrin glucanotransferase (713 aa).

Residues 1-27 (MKKISKLTTALALSLSLALSLLGPAHA) form the signal peptide. The A1 stretch occupies residues 28 to 165 (APDTSVSNKQ…NIKVIIDFAP (138 aa)). 4 residues coordinate Ca(2+): aspartate 54, asparagine 56, asparagine 59, and asparagine 60. Cysteine 70 and cysteine 77 form a disulfide bridge. Positions 78 and 80 each coordinate Ca(2+). 127-128 (YW) contacts substrate. Asparagine 166 is a binding site for Ca(2+). Residues 166–229 (NHTSPASLDQ…NLYDLADLNH (64 aa)) are b. Histidine 167 provides a ligand contact to substrate. Isoleucine 217 contacts Ca(2+). Position 220–223 (220–223 (NLYD)) interacts with substrate. Aspartate 226 is a binding site for Ca(2+). The tract at residues 230 to 433 (NNSTVDTYLK…LRKSNPAIAY (204 aa)) is A2. Arginine 254 serves as a coordination point for substrate. Aspartate 256 serves as the catalytic Nucleophile. 259–260 (KH) serves as a coordination point for substrate. Residue histidine 260 coordinates Ca(2+). Catalysis depends on glutamate 284, which acts as the Proton donor. Residues histidine 354, aspartate 398, and arginine 402 each coordinate substrate. The interval 434–522 (GTTQERWINN…GTAVWQYTTA (89 aa)) is c. The interval 523–609 (VTAPTIGHVG…SNVHDNFEVL (87 aa)) is d. One can recognise an IPT/TIG domain in the interval 526–607 (PTIGHVGPMM…TSSNVHDNFE (82 aa)). Residues 608–713 (VLSGDQVSVR…TATINVNWQP (106 aa)) enclose the CBM20 domain. The segment at 610–713 (SGDQVSVRFV…TATINVNWQP (104 aa)) is e.

The protein belongs to the glycosyl hydrolase 13 family. As to quaternary structure, monomer. It depends on Ca(2+) as a cofactor.

It is found in the secreted. The enzyme catalyses Cyclizes part of a (1-&gt;4)-alpha-D-glucan chain by formation of a (1-&gt;4)-alpha-D-glucosidic bond.. The chain is Cyclomaltodextrin glucanotransferase (cgt) from Bacillus sp. (strain 17-1).